The chain runs to 283 residues: uncharacterized protein (283 aa).

Transmembrane regions (helical) follow at residues 11-31 (LFAYFSGLIAALSLFIYYVSA), 35-55 (EGALILCITFGVIAAGIWFGP), 56-76 (IYALAVTLIVLFVLGTLMMFF), and 93-113 (LVVWGIALLLFSFISGRIHDI). A GGDEF domain is found at 162-283 (NSFVFLLLHM…LENEMMMNEL (122 aa)).

Its subcellular location is the cell membrane. This is an uncharacterized protein from Bacillus subtilis (strain 168).